A 102-amino-acid polypeptide reads, in one-letter code: Small ribosomal subunit protein uS10 (102 aa).

It belongs to the universal ribosomal protein uS10 family. As to quaternary structure, part of the 30S ribosomal subunit.

Involved in the binding of tRNA to the ribosomes. The chain is Small ribosomal subunit protein uS10 from Nitrosospira multiformis (strain ATCC 25196 / NCIMB 11849 / C 71).